The chain runs to 612 residues: Dihydroxy-acid dehydratase (612 aa).

D81 contributes to the Mg(2+) binding site. C122 contributes to the [2Fe-2S] cluster binding site. Mg(2+) is bound by residues D123 and K124. N6-carboxylysine is present on K124. C193 contacts [2Fe-2S] cluster. E489 contributes to the Mg(2+) binding site. Residue S515 is the Proton acceptor of the active site.

Belongs to the IlvD/Edd family. As to quaternary structure, homodimer. [2Fe-2S] cluster serves as cofactor. It depends on Mg(2+) as a cofactor.

The enzyme catalyses (2R)-2,3-dihydroxy-3-methylbutanoate = 3-methyl-2-oxobutanoate + H2O. It carries out the reaction (2R,3R)-2,3-dihydroxy-3-methylpentanoate = (S)-3-methyl-2-oxopentanoate + H2O. It participates in amino-acid biosynthesis; L-isoleucine biosynthesis; L-isoleucine from 2-oxobutanoate: step 3/4. Its pathway is amino-acid biosynthesis; L-valine biosynthesis; L-valine from pyruvate: step 3/4. Functions in the biosynthesis of branched-chain amino acids. Catalyzes the dehydration of (2R,3R)-2,3-dihydroxy-3-methylpentanoate (2,3-dihydroxy-3-methylvalerate) into 2-oxo-3-methylpentanoate (2-oxo-3-methylvalerate) and of (2R)-2,3-dihydroxy-3-methylbutanoate (2,3-dihydroxyisovalerate) into 2-oxo-3-methylbutanoate (2-oxoisovalerate), the penultimate precursor to L-isoleucine and L-valine, respectively. The protein is Dihydroxy-acid dehydratase of Xanthomonas campestris pv. campestris (strain B100).